A 481-amino-acid polypeptide reads, in one-letter code: Glutamate--glyoxylate aminotransferase 2 (481 aa).

Lys-291 is modified (N6-(pyridoxal phosphate)lysine). The short motif at 479-481 (SRM) is the Peroxisomal targeting signal element.

It belongs to the class-I pyridoxal-phosphate-dependent aminotransferase family. Alanine aminotransferase subfamily. Homodimer. Requires pyridoxal 5'-phosphate as cofactor. Post-translationally, the N-terminus is blocked. Expressed at low levels in seedlings, leaves, flowers, roots, and green siliques.

The protein localises to the peroxisome. The catalysed reaction is L-alanine + 2-oxoglutarate = pyruvate + L-glutamate. It carries out the reaction glyoxylate + L-alanine = glycine + pyruvate. The enzyme catalyses glycine + 2-oxoglutarate = glyoxylate + L-glutamate. It functions in the pathway photosynthesis; C4 acid pathway. The protein operates within amino-acid degradation; L-alanine degradation via transaminase pathway; pyruvate from L-alanine: step 1/1. Catalyzes the Glu:glyoxylate aminotransferase (GGT), Ala:glyoxylate aminotransferase (AGT), Ala:2-oxoglutarate aminotransferase (AKT) and Glu:pyruvate aminotransferase (GPT) reactions in peroxisomes. This Arabidopsis thaliana (Mouse-ear cress) protein is Glutamate--glyoxylate aminotransferase 2 (GGAT2).